We begin with the raw amino-acid sequence, 294 residues long: MPELPEVEVVRRGLAEHVAGRVVGAVTITHPRSVRRHLAGSADLAARMTGRRVRAAQRRGKYLWLTFDEPGAADETALDAALVVHLGMSGQMLVQPAAAPVEKHAHIRAALDDGSELRFVDQRTFGGWALAPLAEVDGSLVPEPVAHIARDPLDPRFDAESVVAAIRAKNSEIKRVLLDQTVVSGIGNIYADESLWRAGINGNRLASGLTRPAVRRLLAEVRAVMLEALAAGGTSFDALYVNVNGQSGYFERALAVYGRQDEPCRRCGAPIVREKFMNRSSYSCPRCQPRPRRR.

The active-site Schiff-base intermediate with DNA is Pro2. Glu3 acts as the Proton donor in catalysis. Lys61 serves as the catalytic Proton donor; for beta-elimination activity. 3 residues coordinate DNA: His104, Arg123, and Lys169. The FPG-type zinc-finger motif lies at 255 to 289; it reads AVYGRQDEPCRRCGAPIVREKFMNRSSYSCPRCQP. The Proton donor; for delta-elimination activity role is filled by Arg279.

The protein belongs to the FPG family. As to quaternary structure, monomer. Requires Zn(2+) as cofactor.

It catalyses the reaction Hydrolysis of DNA containing ring-opened 7-methylguanine residues, releasing 2,6-diamino-4-hydroxy-5-(N-methyl)formamidopyrimidine.. It carries out the reaction 2'-deoxyribonucleotide-(2'-deoxyribose 5'-phosphate)-2'-deoxyribonucleotide-DNA = a 3'-end 2'-deoxyribonucleotide-(2,3-dehydro-2,3-deoxyribose 5'-phosphate)-DNA + a 5'-end 5'-phospho-2'-deoxyribonucleoside-DNA + H(+). Functionally, involved in base excision repair of DNA damaged by oxidation or by mutagenic agents. Acts as a DNA glycosylase that recognizes and removes damaged bases. Has a preference for oxidized purines, such as 7,8-dihydro-8-oxoguanine (8-oxoG). Has AP (apurinic/apyrimidinic) lyase activity and introduces nicks in the DNA strand. Cleaves the DNA backbone by beta-delta elimination to generate a single-strand break at the site of the removed base with both 3'- and 5'-phosphates. The sequence is that of Formamidopyrimidine-DNA glycosylase from Nocardia farcinica (strain IFM 10152).